We begin with the raw amino-acid sequence, 377 residues long: tRNA(Met) cytidine acetate ligase (377 aa).

Residues 7-20, Gly100, Asn153, and Arg178 each bind ATP; that span reads ITEY…HLFH.

The protein belongs to the TmcAL family.

It localises to the cytoplasm. The catalysed reaction is cytidine(34) in elongator tRNA(Met) + acetate + ATP = N(4)-acetylcytidine(34) in elongator tRNA(Met) + AMP + diphosphate. In terms of biological role, catalyzes the formation of N(4)-acetylcytidine (ac(4)C) at the wobble position of elongator tRNA(Met), using acetate and ATP as substrates. First activates an acetate ion to form acetyladenylate (Ac-AMP) and then transfers the acetyl group to tRNA to form ac(4)C34. This chain is tRNA(Met) cytidine acetate ligase, found in Staphylococcus epidermidis (strain ATCC 12228 / FDA PCI 1200).